Here is a 656-residue protein sequence, read N- to C-terminus: Methylenetetrahydrofolate reductase (NADPH) (656 aa).

Over residues 1–12 (MVNEARGNSSLN) the composition is skewed to polar residues. A disordered region spans residues 1–44 (MVNEARGNSSLNPCLEGSASSGSESSKDSSRCSTPGLDPERHER). 10 positions are modified to phosphoserine: Ser-9, Ser-10, Ser-18, Ser-20, Ser-21, Ser-23, Ser-25, Ser-26, Ser-29, and Ser-30. Residue Thr-34 is modified to Phosphothreonine. The active-site Proton donor/acceptor is the Glu-63. 63–68 (EFFPPR) provides a ligand contact to NAD(+). A Phosphotyrosine modification is found at Tyr-90. Thr-94 carries the post-translational modification Phosphothreonine. NAD(+) is bound at residue 94–95 (TW). Residue 94–95 (TW) coordinates FAD. The residue at position 103 (Ser-103) is a Phosphoserine. Residues His-127, 157 to 159 (RGD), 174 to 175 (YA), Tyr-197, 201 to 204 (HPEA), Asp-210, and Lys-217 contribute to the FAD site. Asp-159 serves as a coordination point for substrate. Gln-228, Tyr-321, and Arg-325 together coordinate substrate. Residue Ser-394 is modified to Phosphoserine. Thr-451 carries the post-translational modification Phosphothreonine. S-adenosyl-L-methionine is bound by residues Asn-456, 461–464 (AAET), 481–485 (TINSQ), Thr-560, and Thr-573.

Belongs to the methylenetetrahydrofolate reductase family. In terms of assembly, homodimer. FAD serves as cofactor. Phosphorylation of an N-terminal serine-rich phosphorylation region increases sensitivity to S-adenosylmethionine and inhibition.

It carries out the reaction (6S)-5-methyl-5,6,7,8-tetrahydrofolate + NADP(+) = (6R)-5,10-methylene-5,6,7,8-tetrahydrofolate + NADPH + H(+). Its pathway is one-carbon metabolism; tetrahydrofolate interconversion. With respect to regulation, allosterically regulated by S-adenosylmethionine (SAM). In terms of biological role, catalyzes the conversion of 5,10-methylenetetrahydrofolate to 5-methyltetrahydrofolate, a cosubstrate for homocysteine remethylation to methionine. Represents a key regulatory connection between the folate and methionine cycles. The polypeptide is Methylenetetrahydrofolate reductase (NADPH) (Homo sapiens (Human)).